The primary structure comprises 266 residues: Phosphatidylglycerol--prolipoprotein diacylglyceryl transferase (266 aa).

7 helical membrane passes run 10 to 30 (VAIA…LVGI), 56 to 76 (LVFW…VFFY), 92 to 112 (WEGG…TWWF), 120 to 140 (FFEL…AGRI), 172 to 192 (PSQL…LWFY), 200 to 220 (MAVS…VEFV), and 234 to 254 (WLTM…GLIA). Arg139 contacts a 1,2-diacyl-sn-glycero-3-phospho-(1'-sn-glycerol).

Belongs to the Lgt family.

The protein localises to the cell inner membrane. It carries out the reaction L-cysteinyl-[prolipoprotein] + a 1,2-diacyl-sn-glycero-3-phospho-(1'-sn-glycerol) = an S-1,2-diacyl-sn-glyceryl-L-cysteinyl-[prolipoprotein] + sn-glycerol 1-phosphate + H(+). It functions in the pathway protein modification; lipoprotein biosynthesis (diacylglyceryl transfer). In terms of biological role, catalyzes the transfer of the diacylglyceryl group from phosphatidylglycerol to the sulfhydryl group of the N-terminal cysteine of a prolipoprotein, the first step in the formation of mature lipoproteins. This Ectopseudomonas mendocina (strain ymp) (Pseudomonas mendocina) protein is Phosphatidylglycerol--prolipoprotein diacylglyceryl transferase.